We begin with the raw amino-acid sequence, 259 residues long: GTP cyclohydrolase FolE2 (259 aa).

It belongs to the GTP cyclohydrolase IV family.

The enzyme catalyses GTP + H2O = 7,8-dihydroneopterin 3'-triphosphate + formate + H(+). The protein operates within cofactor biosynthesis; 7,8-dihydroneopterin triphosphate biosynthesis; 7,8-dihydroneopterin triphosphate from GTP: step 1/1. In terms of biological role, converts GTP to 7,8-dihydroneopterin triphosphate. This is GTP cyclohydrolase FolE2 from Thermosipho melanesiensis (strain DSM 12029 / CIP 104789 / BI429).